The following is a 353-amino-acid chain: UDP-3-O-acylglucosamine N-acyltransferase (353 aa).

The Proton acceptor role is filled by histidine 242.

Belongs to the transferase hexapeptide repeat family. LpxD subfamily. Homotrimer.

The enzyme catalyses a UDP-3-O-[(3R)-3-hydroxyacyl]-alpha-D-glucosamine + a (3R)-hydroxyacyl-[ACP] = a UDP-2-N,3-O-bis[(3R)-3-hydroxyacyl]-alpha-D-glucosamine + holo-[ACP] + H(+). It participates in bacterial outer membrane biogenesis; LPS lipid A biosynthesis. In terms of biological role, catalyzes the N-acylation of UDP-3-O-acylglucosamine using 3-hydroxyacyl-ACP as the acyl donor. Is involved in the biosynthesis of lipid A, a phosphorylated glycolipid that anchors the lipopolysaccharide to the outer membrane of the cell. This chain is UDP-3-O-acylglucosamine N-acyltransferase, found in Pseudomonas aeruginosa (strain UCBPP-PA14).